We begin with the raw amino-acid sequence, 197 residues long: dITP/XTP pyrophosphatase (197 aa).

Substrate is bound at residue 9-14; that stretch reads SNNAGK. Aspartate 70 acts as the Proton acceptor in catalysis. Aspartate 70 contributes to the Mg(2+) binding site. Substrate is bound by residues serine 71, 153–156, lysine 176, and 181–182; these read FGYD and HR.

The protein belongs to the HAM1 NTPase family. In terms of assembly, homodimer. Mg(2+) is required as a cofactor.

The catalysed reaction is XTP + H2O = XMP + diphosphate + H(+). The enzyme catalyses dITP + H2O = dIMP + diphosphate + H(+). It catalyses the reaction ITP + H2O = IMP + diphosphate + H(+). Its function is as follows. Pyrophosphatase that catalyzes the hydrolysis of nucleoside triphosphates to their monophosphate derivatives, with a high preference for the non-canonical purine nucleotides XTP (xanthosine triphosphate), dITP (deoxyinosine triphosphate) and ITP. Seems to function as a house-cleaning enzyme that removes non-canonical purine nucleotides from the nucleotide pool, thus preventing their incorporation into DNA/RNA and avoiding chromosomal lesions. This is dITP/XTP pyrophosphatase from Chromobacterium violaceum (strain ATCC 12472 / DSM 30191 / JCM 1249 / CCUG 213 / NBRC 12614 / NCIMB 9131 / NCTC 9757 / MK).